The sequence spans 434 residues: Nicotinate phosphoribosyltransferase (434 aa).

H242 is subject to Phosphohistidine; by autocatalysis.

This sequence belongs to the NAPRTase family. Post-translationally, transiently phosphorylated on a His residue during the reaction cycle. Phosphorylation strongly increases the affinity for substrates and increases the rate of nicotinate D-ribonucleotide production. Dephosphorylation regenerates the low-affinity form of the enzyme, leading to product release.

It catalyses the reaction nicotinate + 5-phospho-alpha-D-ribose 1-diphosphate + ATP + H2O = nicotinate beta-D-ribonucleotide + ADP + phosphate + diphosphate. It participates in cofactor biosynthesis; NAD(+) biosynthesis; nicotinate D-ribonucleotide from nicotinate: step 1/1. Catalyzes the synthesis of beta-nicotinate D-ribonucleotide from nicotinate and 5-phospho-D-ribose 1-phosphate at the expense of ATP. The sequence is that of Nicotinate phosphoribosyltransferase from Rhizobium etli (strain ATCC 51251 / DSM 11541 / JCM 21823 / NBRC 15573 / CFN 42).